We begin with the raw amino-acid sequence, 102 residues long: Monothiol glutaredoxin-S8 (102 aa).

A Glutaredoxin domain is found at 1-101; the sequence is MEKIQKMISE…PMLKRFGALW (101 aa). Cys21 provides a ligand contact to [2Fe-2S] cluster. A Responsive for interaction with TGA factors motif is present at residues 99-102; the sequence is ALWL.

Belongs to the glutaredoxin family. CC-type subfamily.

Its subcellular location is the cytoplasm. It is found in the nucleus. Functionally, may only reduce GSH-thiol disulfides, but not protein disulfides. The protein is Monothiol glutaredoxin-S8 (GRXS8) of Arabidopsis thaliana (Mouse-ear cress).